The primary structure comprises 578 residues: Serine/threonine-protein kinase D6PKL3 (578 aa).

Low complexity predominate over residues 1–24 (MDSSSSVVYVGSSSKSRNFQSKSK). The tract at residues 1–64 (MDSSSSVVYV…EVIESSVSSV (64 aa)) is disordered. The segment covering 25–34 (GSITSFSIDS) has biased composition (polar residues). A compositionally biased stretch (low complexity) spans 53 to 64 (SPEVIESSVSSV). The Protein kinase domain occupies 182–516 (FKLIKKLGGG…ATEIKQHPFF (335 aa)). ATP-binding positions include 188 to 196 (LGGGDIGNV) and lysine 211. Residue aspartate 307 is the Proton acceptor of the active site. The interval 325 to 426 (DFDLSLRCAV…VGTHEYLAPE (102 aa)) is activation loop. Positions 575–578 (IDFF) match the PIF motif.

This sequence belongs to the protein kinase superfamily. AGC Ser/Thr protein kinase family. In terms of tissue distribution, expressed predominantly in root tissue with lower levels found in leaf, stem, seed and flower.

The protein localises to the cell membrane. The catalysed reaction is L-seryl-[protein] + ATP = O-phospho-L-seryl-[protein] + ADP + H(+). It carries out the reaction L-threonyl-[protein] + ATP = O-phospho-L-threonyl-[protein] + ADP + H(+). In terms of biological role, protein kinase that regulates the auxin transport activity of PIN auxin efflux facilitators by direct phosphorylation. D6PK-mediated PIN phosphorylation promotes auxin transport in the hypocotyl and this is a prerequisite for PHOT1-dependent hypocotyl bending. This Arabidopsis thaliana (Mouse-ear cress) protein is Serine/threonine-protein kinase D6PKL3 (D6PKL3).